Consider the following 1034-residue polypeptide: MPWFPVKKVRKQMKLLLLLLLLTCAAWLTYVHRSLVRPGRALRQRLGYGRDGEKLTGVTDSRGVRVPSSTQRSEDSSESHEEEQAPEGRGPNMLFPGGPRKPPPLNLTHQTPPWREEFKGQVNLHVFEDWCGGAVGHLRRNLHFPLFPHTRTTVTKLAVSPKWKNYGLRIFGFIHPARDGDIQFSVASDDNSEFWLSLDESPAAAQLVAFVGKTGSEWTAPGEFTKFSSQVSKPRRLMASRRYYFELLHKQDDKGSDHVEVGWRAFLPGLKFEIIDSAHISLYTDESSLKMDHVAHVPQSPASHIGGFPPQGEPSADMLHPDPRDTFFLTPRMEPLSLENVLEPCAYAPTYILKDFPIARYQGLQFVYLSFIYPNDHTRLTHMETDNKCFYRESPLYLERFGFYKYMKMDKEEGEEDEEEEVQRRAFLFLNPDDFLDEEDEQDLLDSLEPTDASVQQSHRTPTPAASTGTTASPTPPTTSPLDEQTLRHSRALNWAPRPLPLFLGRAPPPRTVEKSPSKVYVTRVRPGQRASPRALRDSPWPPFPGVFLRPKPLPRVQLRVPPHPPRTQGYRTSGPKVTELKPPVRAQTSQGGREGQLHGQGLMVPTVDLNSSVETQPVTSFLSLSQVSRPQLPGEGEEGEEDGAPGDEATSEDSEEEEEPAAGRPLGRWREDAINWQRTFSVGAMDFELLRSDWNDLRCNVSGNLQLPEAEAVDVVAQYMERLNAKHGGRFSLLRIVNVEKRRDSARGSRFLLELELQERGGSRQRLSEYVFLRLPGARVGDEDGESPEPPPAASIHPDSRPELCRPLHLAWRQDVMVHFIVPVKNQARWVVQFLADMTALHVHTGDSYFNIILVDFESEDMDVERALRAAQLPRYQYLKRTGNFERSAGLQTGVDAVEDPSSIVFLCDLHIHFPPNILDSIRKHCVEGKLAFAPVVMRLGCGSSPWDPHGYWEVNGFGLFGIYKSDFDRVGGMNTEEFRDQWGGEDWELLDRVLQAGLEVERLRLRHFYHHYHSKRGMWATRSRKGARAQRS.

Residues 1–12 (MPWFPVKKVRKQ) lie on the Cytoplasmic side of the membrane. The chain crosses the membrane as a helical; Signal-anchor for type II membrane protein span at residues 13–31 (MKLLLLLLLLTCAAWLTYV). The Lumenal portion of the chain corresponds to 32 to 1034 (HRSLVRPGRA…SRKGARAQRS (1003 aa)). Positions 51–104 (DGEKLTGVTDSRGVRVPSSTQRSEDSSESHEEEQAPEGRGPNMLFPGGPRKPPP) are disordered. Residues 72-83 (RSEDSSESHEEE) are compositionally biased toward basic and acidic residues. A glycan (N-linked (GlcNAc...) asparagine) is linked at Asn106. The 171-residue stretch at 109–279 (HQTPPWREEF…LKFEIIDSAH (171 aa)) folds into the PA14 domain. Disordered stretches follow at residues 450 to 486 (PTDA…DEQT) and 556 to 600 (RVQL…QLHG). Over residues 461–473 (TPTPAASTGTTAS) the composition is skewed to low complexity. Asn611 is a glycosylation site (N-linked (GlcNAc...) asparagine). 2 disordered regions span residues 626–669 (SQVS…PLGR) and 782–801 (GDED…HPDS). A compositionally biased stretch (acidic residues) spans 636 to 661 (EGEEGEEDGAPGDEATSEDSEEEEEP).

Belongs to the chondroitin N-acetylgalactosaminyltransferase family.

It localises to the golgi apparatus. The protein resides in the golgi stack membrane. It carries out the reaction an N-acetyl-beta-D-glucosaminyl derivative + UDP-N-acetyl-alpha-D-galactosamine = an N-acetyl-beta-D-galactosaminyl-(1-&gt;4)-N-acetyl-beta-D-glucosaminyl derivative + UDP + H(+). In terms of biological role, transfers N-acetylgalactosamine (GalNAc) from UDP-GalNAc to N-acetylglucosamine-beta-benzyl with a beta-1,4-linkage to form N,N'-diacetyllactosediamine, GalNAc-beta-1,4-GlcNAc structures in N-linked glycans and probably O-linked glycans. The polypeptide is N-acetyl-beta-glucosaminyl-glycoprotein 4-beta-N-acetylgalactosaminyltransferase 1 (B4galnt4) (Mus musculus (Mouse)).